A 658-amino-acid polypeptide reads, in one-letter code: Glycogen debranching enzyme (658 aa).

The active-site Nucleophile is the Asp-335. Glu-370 functions as the Proton donor in the catalytic mechanism. Positions 457-468 (NDANGEGNRDGT) are enriched in basic and acidic residues. The disordered stretch occupies residues 457–481 (NDANGEGNRDGTDSNFSNNHGTEGL).

The protein belongs to the glycosyl hydrolase 13 family.

The catalysed reaction is Hydrolysis of (1-&gt;6)-alpha-D-glucosidic linkages to branches with degrees of polymerization of three or four glucose residues in limit dextrin.. It functions in the pathway glycan degradation; glycogen degradation. Functionally, removes maltotriose and maltotetraose chains that are attached by 1,6-alpha-linkage to the limit dextrin main chain, generating a debranched limit dextrin. This is Glycogen debranching enzyme from Pectobacterium atrosepticum (strain SCRI 1043 / ATCC BAA-672) (Erwinia carotovora subsp. atroseptica).